Here is a 1026-residue protein sequence, read N- to C-terminus: Multidrug resistance protein MdtC (1026 aa).

Helical transmembrane passes span 15–35, 333–353, 360–380, 387–407, 431–451, 463–483, 528–548, 853–873, 897–917, 953–973, and 984–1004; these read ILIA…LPVA, EVEE…FLFL, LIPA…MYLC, LSLM…IVVL, VGFT…PLLL, FAVT…TLTP, LVGV…IAIP, LILI…LYES, LFNA…IGIV, PIMM…LSGG, and ITIV…TPVV.

The protein belongs to the resistance-nodulation-cell division (RND) (TC 2.A.6) family. MdtC subfamily. Part of a tripartite efflux system composed of MdtA, MdtB and MdtC. MdtC forms a heteromultimer with MdtB.

It localises to the cell inner membrane. This chain is Multidrug resistance protein MdtC, found in Salmonella paratyphi C (strain RKS4594).